Reading from the N-terminus, the 333-residue chain is Phosphate acyltransferase (333 aa).

The protein belongs to the PlsX family. Homodimer. Probably interacts with PlsY.

The protein resides in the cytoplasm. It carries out the reaction a fatty acyl-[ACP] + phosphate = an acyl phosphate + holo-[ACP]. It participates in lipid metabolism; phospholipid metabolism. Functionally, catalyzes the reversible formation of acyl-phosphate (acyl-PO(4)) from acyl-[acyl-carrier-protein] (acyl-ACP). This enzyme utilizes acyl-ACP as fatty acyl donor, but not acyl-CoA. The chain is Phosphate acyltransferase from Bacillus subtilis (strain 168).